The following is a 601-amino-acid chain: Mitochondrial tRNA methylthiotransferase CDK5RAP1 (601 aa).

Residues 1–33 (MHPLQCVLQVQRSLGWGPLASVSWLSLRMCRAH) constitute a mitochondrion transit peptide. The MTTase N-terminal domain occupies 100–220 (RKVYLETYGC…LPRLLAVAES (121 aa)). [4Fe-4S] cluster is bound by residues Cys109, Cys145, Cys183, Cys258, Cys262, and Cys265. In terms of domain architecture, Radical SAM core spans 244-512 (SASATSAFVS…ITIFREEATK (269 aa)). Residues 515–590 (QTSVGCTQLV…SQTLRGHVLC (76 aa)) enclose the TRAM domain.

This sequence belongs to the methylthiotransferase family. MiaB subfamily. In terms of assembly, interacts with CDK5R1 (p35 form). CDK5RAP1, CDK5RAP2 and CDK5RAP3 show competitive binding to CDK5R1. Forms a complex with CDK5R1 and CDK5. [4Fe-4S] cluster serves as cofactor. Expressed in heart, brain, placenta, lung, liver, skeletal muscle, kidney and pancreas. Expressed in neurons of central nervous tissue. In terms of tissue distribution, mainly expressed in brain, placenta and testis. As to expression, high expression in placenta and lung.

It is found in the mitochondrion. It carries out the reaction N(6)-dimethylallyladenosine(37) in tRNA + (sulfur carrier)-SH + AH2 + 2 S-adenosyl-L-methionine = 2-methylsulfanyl-N(6)-dimethylallyladenosine(37) in tRNA + (sulfur carrier)-H + 5'-deoxyadenosine + L-methionine + A + S-adenosyl-L-homocysteine + 2 H(+). Functionally, methylthiotransferase that catalyzes the conversion of N6-(dimethylallyl)adenosine (i(6)A) to 2-methylthio-N6-(dimethylallyl)adenosine (ms(2)i(6)A) at position 37 (adjacent to the 3'-end of the anticodon) of four mitochondrial DNA-encoded tRNAs (Ser(UCN), Phe, Tyr and Trp). Essential for efficient and highly accurate protein translation by the ribosome. Specifically inhibits CDK5 activation by CDK5R1. Essential for efficient mitochondrial protein synthesis and respiratory chain; shows pathological consequences in mitochondrial disease. This chain is Mitochondrial tRNA methylthiotransferase CDK5RAP1, found in Homo sapiens (Human).